The chain runs to 98 residues: NADH-ubiquinone oxidoreductase chain 4L (98 aa).

3 helical membrane passes run 1 to 21, 25 to 45, and 57 to 79; these read MLAINLNLTVAFMLALTGVLV, HLMSTLLCLEGMMLSLFILMT, and SMAPLILLVFSACEAGVGLALLV.

The protein belongs to the complex I subunit 4L family. Core subunit of respiratory chain NADH dehydrogenase (Complex I) which is composed of 45 different subunits.

Its subcellular location is the mitochondrion inner membrane. The catalysed reaction is a ubiquinone + NADH + 5 H(+)(in) = a ubiquinol + NAD(+) + 4 H(+)(out). In terms of biological role, core subunit of the mitochondrial membrane respiratory chain NADH dehydrogenase (Complex I) which catalyzes electron transfer from NADH through the respiratory chain, using ubiquinone as an electron acceptor. Part of the enzyme membrane arm which is embedded in the lipid bilayer and involved in proton translocation. The protein is NADH-ubiquinone oxidoreductase chain 4L (MT-ND4L) of Dasyurus hallucatus (Northern quoll).